The following is a 129-amino-acid chain: MSNIPAELKYASSHEWIRKEEDGSYTVGISEHAQELLGDMVFIELPDVGDTLSAGEDCAVAESVKAASDIYAPLSGEVLAINEALEDSPELVNSDAFGDGWFFRVMPSDVAEIDSLLDAEGYQAVIDEE.

The 83-residue stretch at 24-106 (SYTVGISEHA…FGDGWFFRVM (83 aa)) folds into the Lipoyl-binding domain. Lys-65 bears the N6-lipoyllysine mark.

It belongs to the GcvH family. The glycine cleavage system is composed of four proteins: P, T, L and H. It depends on (R)-lipoate as a cofactor.

In terms of biological role, the glycine cleavage system catalyzes the degradation of glycine. The H protein shuttles the methylamine group of glycine from the P protein to the T protein. The protein is Glycine cleavage system H protein of Shewanella sediminis (strain HAW-EB3).